A 761-amino-acid polypeptide reads, in one-letter code: Phosphoribosylformylglycinamidine synthase subunit PurL (761 aa).

Residue H58 is part of the active site. Residues Y61 and K105 each coordinate ATP. A Mg(2+)-binding site is contributed by E107. Substrate-binding positions include S108 to H111 and R130. The active-site Proton acceptor is the H109. D131 is a binding site for Mg(2+). Q259 contacts substrate. Mg(2+) is bound at residue D287. Residue E331–Q333 coordinates substrate. ATP is bound by residues N519 and G556. A Mg(2+)-binding site is contributed by N557. S559 serves as a coordination point for substrate.

It belongs to the FGAMS family. In terms of assembly, monomer. Part of the FGAM synthase complex composed of 1 PurL, 1 PurQ and 2 PurS subunits.

Its subcellular location is the cytoplasm. It carries out the reaction N(2)-formyl-N(1)-(5-phospho-beta-D-ribosyl)glycinamide + L-glutamine + ATP + H2O = 2-formamido-N(1)-(5-O-phospho-beta-D-ribosyl)acetamidine + L-glutamate + ADP + phosphate + H(+). Its pathway is purine metabolism; IMP biosynthesis via de novo pathway; 5-amino-1-(5-phospho-D-ribosyl)imidazole from N(2)-formyl-N(1)-(5-phospho-D-ribosyl)glycinamide: step 1/2. Part of the phosphoribosylformylglycinamidine synthase complex involved in the purines biosynthetic pathway. Catalyzes the ATP-dependent conversion of formylglycinamide ribonucleotide (FGAR) and glutamine to yield formylglycinamidine ribonucleotide (FGAM) and glutamate. The FGAM synthase complex is composed of three subunits. PurQ produces an ammonia molecule by converting glutamine to glutamate. PurL transfers the ammonia molecule to FGAR to form FGAM in an ATP-dependent manner. PurS interacts with PurQ and PurL and is thought to assist in the transfer of the ammonia molecule from PurQ to PurL. This chain is Phosphoribosylformylglycinamidine synthase subunit PurL, found in Rhodococcus opacus (strain B4).